The primary structure comprises 490 residues: Probable glycine dehydrogenase (decarboxylating) subunit 2 (490 aa).

Lys-273 is subject to N6-(pyridoxal phosphate)lysine.

This sequence belongs to the GcvP family. C-terminal subunit subfamily. The glycine cleavage system is composed of four proteins: P, T, L and H. In this organism, the P 'protein' is a heterodimer of two subunits. Requires pyridoxal 5'-phosphate as cofactor.

The catalysed reaction is N(6)-[(R)-lipoyl]-L-lysyl-[glycine-cleavage complex H protein] + glycine + H(+) = N(6)-[(R)-S(8)-aminomethyldihydrolipoyl]-L-lysyl-[glycine-cleavage complex H protein] + CO2. Functionally, the glycine cleavage system catalyzes the degradation of glycine. The P protein binds the alpha-amino group of glycine through its pyridoxal phosphate cofactor; CO(2) is released and the remaining methylamine moiety is then transferred to the lipoamide cofactor of the H protein. In Staphylococcus aureus (strain Mu50 / ATCC 700699), this protein is Probable glycine dehydrogenase (decarboxylating) subunit 2.